Reading from the N-terminus, the 509-residue chain is Otolin-1 (509 aa).

An N-terminal signal peptide occupies residues 1–25 (MPSLRLLAILTTLLAVVLMATQSSA). The interval 23–96 (SSATRTTRRP…AYSLSPTDST (74 aa)) is disordered. Residues 42–54 (RGGGTGGGGGGGD) show a composition bias toward gly residues. Positions 62–75 (RQTTTTMSPSSSLG) are enriched in polar residues. N-linked (GlcNAc...) asparagine glycosylation occurs at N121. The Collagen-like 1 domain occupies 193-244 (GDKGDQGDTGMPGAPGILGKEGQKGDLGPKGEKGETGLPGLKGDLGERGKPG). The segment at 202 to 372 (GMPGAPGILG…GPKGPQGETA (171 aa)) is disordered. Residues 213-227 (EGQKGDLGPKGEKGE) show a composition bias toward basic and acidic residues. N246 and N311 each carry an N-linked (GlcNAc...) asparagine glycan. The region spanning 285 to 329 (GEKGEKGEAGLPGPPGPRGSVGPPGVNGSNGLPGPVGLRGQLGSP) is the Collagen-like 2 domain. Over residues 302-322 (RGSVGPPGVNGSNGLPGPVGL) the composition is skewed to low complexity. Gly residues predominate over residues 327 to 342 (GSPGGKGEAGGRGPPG). The C1q domain maps to 372–509 (AEQIRSAFSV…GFLLYADPKA (138 aa)). N417 is a glycosylation site (N-linked (GlcNAc...) asparagine).

Belongs to the OTOL1 family. As to quaternary structure, homooligomer; disulfide-linked; probably forms homotrimers. Interacts with otomp.

The protein localises to the secreted. The protein resides in the extracellular space. It localises to the extracellular matrix. Collagen-like protein, which provides an organic scaffold for otoliths onto the sensory epithelium of the inner ear. Acts as a scaffold for biomineralization by sequestering calcium. The protein is Otolin-1 (Otol1) of Oncorhynchus mykiss (Rainbow trout).